The chain runs to 299 residues: pH-regulated antigen PRA1 (299 aa).

The first 15 residues, 1-15 (MNYLLFCLFFAFSVA), serve as a signal peptide directing secretion. 4 N-linked (GlcNAc...) asparagine glycosylation sites follow: asparagine 48, asparagine 89, asparagine 135, and asparagine 208. The segment at 253–299 (FEDSDSGSDSGASSTASSSHQHTDSNPSATTDANSHCHTHADGEVHC) is disordered. The segment covering 259–272 (GSDSGASSTASSSH) has biased composition (low complexity). Over residues 278–288 (NPSATTDANSH) the composition is skewed to polar residues.

This sequence belongs to the ZPS1 family. Component of a multiprotein complex of 250 kDa composed of at least HYR1, MP65, and PRA1. Interacts with host Integrin alpha-M/beta-2 heterodimer. Also binds human factor H (CFH), CFHR1, plasminogen (PLG), complement C3, and C4BPA. Interacts with ZRT101. Post-translationally, N- and O-glycosylated. The N- and 0-glycosidically linked carbohydrates represent 18 to 20 percent and 3 to 4 percent, respectively, of the molecular mass of PRA1. 0-linked sugar residues may be involved in the interaction with fibrinogen. Contributes highly to the carbohydrate component of the matrix. Treatment with tunicamycin impairs glycosylation.

It localises to the secreted. In terms of biological role, cell surface protein involved in the host-parasite interaction during candidal infection. With MP65, represents a major component of the biofilm matrix. As a surface protein, binds the two human complement regulators CFH and CFHR1, as well as plasminogen PLG, mediates complement evasion and extra-cellular matrix interaction and/or degradation. As a released protein, enhances complement control in direct vicinity of the yeast and thus generates an additional protective layer which controls host complement attack, assisting the fungus in escaping host surveillance. Binds to host fluid-phase C3 and blocks cleavage of C3 to C3a and C3b, leading to inhibition of complement activation and protection from uptake of C.albicans by human macrophages. Also mediates human complement control and complement evasion through binding to C4BPA, another human complement inhibitor, as well as through binding to host integrin alpha-M/beta-2. Binds zinc from its environment and then reassociates with ZRT1 to acquire this essential metal. In Candida albicans (strain SC5314 / ATCC MYA-2876) (Yeast), this protein is pH-regulated antigen PRA1.